The following is an 888-amino-acid chain: MNFQEFKHKYGYDAATKMMQQYLDIKFAHLDCLLLFRMGDFYEMFYEDAVLASGVLGIALTKRGKNGDEEVPMCGVPYHALENYLTKLIEENYKVAICDQLETPEEAKNRGGYKAVVNRNVTRIITPGTVIEENLITTVEPNYLASLVVPKNKDTAALCYADLSTSTIFVVNVPELEILNELARLKPREILLSEHLRSSDLASNISKQLNFRITYQVDSFFAVNKCEKIILDFYKMKDIKGVGEISNSQICAIGSILEYLTLTQKENIPNLPKPKIIDFHSYMTIDFSTRRNLEIVTNSCGGNKGSLLSTLNHTVTKQGGRLLYNFLSSPLTDTHKINQRLNITEFFHSNLDITAKVRELLKKTSDIERCLTRITMNRGSGRDLLSIKYTLETANSIKEIFFDNYGFELPSFIEKIVKPLIRNDELYNLIEESICEDAPNNLNDGGVIKHSYHPKVLQLHDLINNGKLHIEKLKDQYKKETGIDSLKISHNNVIGLFIDITAKNANKINDPKFIHRQTTVNSVRYTTAELQKLESDLVNAKTLVVSLEKELYEDICKRVTKQSDYLRILASSLSGIDVFCNFAYIASENDYTRPEFTDDLSFDIVKGRHPVVEEALNKERKSFVHNDCHLSEAERIWLITGPNMAGKSTFLRQNAIIAIIAQIGSFVPAKSARIGMVDKIFSRIGAADDLIKGQSTFMAEMLETSAILAQSTKNSLIILDEVGRGTSTYDGVSIAWSVLEYIHDKLKCRCLFATHYHELTIMDNFLPAMQNYTIAIEESGKDILFLHNIIAGAADRSYGIHVAALAGLPASVINRAEQILLKFEKNAAGKGKNILSTESNNLSLFAIESPKLQNSKLEEKFKTIDPDKLSPKEALELLYQLKSNFIKQ.

641–648 (GPNMAGKS) is a binding site for ATP.

It belongs to the DNA mismatch repair MutS family.

This protein is involved in the repair of mismatches in DNA. It is possible that it carries out the mismatch recognition step. This protein has a weak ATPase activity. The protein is DNA mismatch repair protein MutS of Rickettsia bellii (strain RML369-C).